Here is a 496-residue protein sequence, read N- to C-terminus: Proline--tRNA ligase (496 aa).

The protein belongs to the class-II aminoacyl-tRNA synthetase family. ProS type 3 subfamily. As to quaternary structure, homodimer.

The protein localises to the cytoplasm. It catalyses the reaction tRNA(Pro) + L-proline + ATP = L-prolyl-tRNA(Pro) + AMP + diphosphate. In terms of biological role, catalyzes the attachment of proline to tRNA(Pro) in a two-step reaction: proline is first activated by ATP to form Pro-AMP and then transferred to the acceptor end of tRNA(Pro). The chain is Proline--tRNA ligase from Phocaeicola vulgatus (strain ATCC 8482 / DSM 1447 / JCM 5826 / CCUG 4940 / NBRC 14291 / NCTC 11154) (Bacteroides vulgatus).